Reading from the N-terminus, the 913-residue chain is Calcium-activated chloride channel regulator 1 (913 aa).

The signal sequence occupies residues 1 to 21; that stretch reads MGSFKSSVFILVLHLLEGALS. The tract at residues 46 to 199 is metalloprotease domain; sequence DETLIQQIKD…DIAGKNVVNH (154 aa). His156 lines the Zn(2+) pocket. Residue Glu157 is part of the active site. 2 residues coordinate Zn(2+): His160 and Asn167. Positions 306–475 constitute a VWFA domain; sequence IVCLVLDKSG…NGLIDAFGAL (170 aa). Residues Asn503, Asn514, Asn770, Asn804, Asn810, Asn836, and Asn885 are each glycosylated (N-linked (GlcNAc...) asparagine).

It belongs to the CLCR family. Post-translationally, glycosylated. The translation product is autoproteolytically cleaved by the metalloprotease domain in the endoplasmic reticulum into a N-terminal and a C-terminal products that remain physically associated with each other. The cleavage is necessary for calcium-activated chloride channel (CaCC) activation activity. Expressed in mucin-producing cells in the respiratory and intestinal tracts, cutaneous sweat glands, and renal mucous glands (at protein level). Strong overexpression in the airways of horses with recurrent airway obstruction (at protein level).

It localises to the secreted. It is found in the extracellular space. May be involved in mediating calcium-activated chloride conductance. May play critical roles in goblet cell metaplasia, mucus hypersecretion, cystic fibrosis and AHR. May be involved in the regulation of mucus production and/or secretion by goblet cells. Involved in the regulation of tissue inflammation in the innate immune response. May play a role as a tumor suppressor. Induces MUC5AC. This Equus caballus (Horse) protein is Calcium-activated chloride channel regulator 1 (CLCA1).